The sequence spans 60 residues: Ferredoxin-1 (60 aa).

4Fe-4S ferredoxin-type domains are found at residues 2 to 27 and 28 to 60; these read LYIT…SAGD and DIYV…IVQG. Residues Cys8, Cys11, Cys14, Cys18, Cys37, Cys40, Cys48, and Cys52 each contribute to the [4Fe-4S] cluster site.

[4Fe-4S] cluster is required as a cofactor.

Its function is as follows. Ferredoxins are iron-sulfur proteins that transfer electrons in a wide variety of metabolic reactions. The sequence is that of Ferredoxin-1 from Chlorobium limicola.